The sequence spans 2593 residues: Citrinin polyketide synthase (2593 aa).

The tract at residues 70-224 is N-terminal acylcarrier protein transacylase domain (SAT); the sequence is KLLENLNAWI…YVSVIVDQRR (155 aa). Residue Cys139 is the Nucleophile; for transacylase activity of the active site. His258 functions as the Proton donor/acceptor; for transacylase activity in the catalytic mechanism. The region spanning 391–806 is the Ketosynthase family 3 (KS3) domain; the sequence is DERIAVIGMA…GSNASMVVTQ (416 aa). Residues Cys555, His690, and His729 each act as for beta-ketoacyl synthase activity in the active site. A malonyl-CoA:ACP transacylase (MAT) domain region spans residues 906–1191; the sequence is PDPKPVILCF…VAIWLEAGSN (286 aa). An N-terminal hotdog fold region spans residues 1291 to 1424; that stretch reads PKGLTTFVGY…GTITFQAADS (134 aa). One can recognise a PKS/mFAS DH domain in the interval 1291 to 1603; sequence PKGLTTFVGY…YQKVSISGIR (313 aa). The segment at 1322-1601 is product template (PT) domain; sequence LLSGHIMANA…ISYQKVSISG (280 aa). His1326 (proton acceptor; for dehydratase activity) is an active-site residue. The C-terminal hotdog fold stretch occupies residues 1451–1603; it reads VADDILQGRN…YQKVSISGIR (153 aa). Catalysis depends on Asp1508, which acts as the Proton donor; for dehydratase activity. A disordered region spans residues 1636–1662; sequence VADSPLVDGSSTAVSGTPPTKKAPKAP. The Carrier domain maps to 1661–1738; it reads APSVDITGKM…SLVECMQRIL (78 aa). Residue Ser1689 is modified to O-(pantetheine 4'-phosphoryl)serine. Active-site for methyltransferase activity residues include Tyr1955, His2067, and Glu2093. Residues 1960–2134 form a methyltransferase (CMeT) domain region; that stretch reads INAVWIQQAE…ATHWKKILTS (175 aa). The tract at residues 2215-2459 is NADPH-binding (R) domain; it reads PAPTGHCVLV…KALPDFDGSL (245 aa).

Pantetheine 4'-phosphate serves as cofactor.

It participates in mycotoxin biosynthesis. Non-reducing polyketide synthase; part of the gene cluster that mediates the biosynthesis of the mycotoxin citrinin, a hepato-nephrotoxic compound to humans due to inhibition of respiration complex III. The pathway begins with the synthesis of a keto-aldehyde intermediate by the citrinin PKS (pksCT) from successive condensations of 4 malonyl-CoA units, presumably with a simple acetyl-CoA starter unit. Release of the keto-aldehyde intermediate is consistent with the presence of the C-terminal reductive release domain. Mp11 collaborates with pksCT by catalyzing the hydrolysis of ACP-bound acyl intermediates to free the ACP from stalled intermediates. Mpl2 then catalyzes the oxidation of the C-12 methyl of the ketone intermediate to an alcohol intermediate which is further oxidized by the oxidoreductase mpl7 to produce a bisaldehyde intermediate. The fourth catalytic step is catalyzed by the mpl4 aldehyde dehydrogenase. The final transformation is the reduction of C-3 by mpl6 to provide the chemically stable citrinin nucleus. The protein is Citrinin polyketide synthase of Monascus purpureus (Red mold).